The sequence spans 107 residues: Large ribosomal subunit protein uL24 (107 aa).

It belongs to the universal ribosomal protein uL24 family. In terms of assembly, part of the 50S ribosomal subunit.

One of two assembly initiator proteins, it binds directly to the 5'-end of the 23S rRNA, where it nucleates assembly of the 50S subunit. Its function is as follows. One of the proteins that surrounds the polypeptide exit tunnel on the outside of the subunit. The sequence is that of Large ribosomal subunit protein uL24 from Mesomycoplasma hyopneumoniae (strain J / ATCC 25934 / NCTC 10110) (Mycoplasma hyopneumoniae).